The primary structure comprises 310 residues: Protein DOS2 (310 aa).

Composition is skewed to basic and acidic residues over residues 15 to 26 and 135 to 146; these read DKISNSHTKETG and SNDKDENSKENE. Disordered stretches follow at residues 15 to 45 and 131 to 151; these read DKIS…KTNE and AEND…AVGG. A BSD domain is found at 176–228; sequence QLDPFDVDEKTEEICSILQGDKDISKLMNDIVPHKISYKDFWHIYFLQRNKIL. Positions 240 to 310 are disordered; it reads KKEKETEEKE…KDDDDDDDWE (71 aa). The segment covering 247 to 263 has biased composition (acidic residues); sequence EKEVEWDDEEEEEDDDK. Composition is skewed to basic and acidic residues over residues 264–276 and 284–300; these read VEAV…KGET and GLKD…KDES. Residues 301–310 show a composition bias toward acidic residues; it reads KDDDDDDDWE.

In terms of biological role, acts in ubiquitin metabolism and is necessary for the control of single-copy DNA replication. The protein is Protein DOS2 (DOS2) of Saccharomyces cerevisiae (strain ATCC 204508 / S288c) (Baker's yeast).